The primary structure comprises 210 residues: Protein GrpE (210 aa).

The tract at residues 1-42 (MANEERTIPETNVASERPEDPVESQTRAEGGEQIQEAAPETA) is disordered.

It belongs to the GrpE family. In terms of assembly, homodimer.

Its subcellular location is the cytoplasm. Its function is as follows. Participates actively in the response to hyperosmotic and heat shock by preventing the aggregation of stress-denatured proteins, in association with DnaK and GrpE. It is the nucleotide exchange factor for DnaK and may function as a thermosensor. Unfolded proteins bind initially to DnaJ; upon interaction with the DnaJ-bound protein, DnaK hydrolyzes its bound ATP, resulting in the formation of a stable complex. GrpE releases ADP from DnaK; ATP binding to DnaK triggers the release of the substrate protein, thus completing the reaction cycle. Several rounds of ATP-dependent interactions between DnaJ, DnaK and GrpE are required for fully efficient folding. This chain is Protein GrpE, found in Nitrosococcus oceani (strain ATCC 19707 / BCRC 17464 / JCM 30415 / NCIMB 11848 / C-107).